The primary structure comprises 265 residues: Glutamate racemase (265 aa).

Substrate contacts are provided by residues 13 to 14 (DS) and 45 to 46 (YG). Cys-77 (proton donor/acceptor) is an active-site residue. Position 78–79 (78–79 (NT)) interacts with substrate. Cys-185 functions as the Proton donor/acceptor in the catalytic mechanism. 186–187 (TH) is a substrate binding site.

Belongs to the aspartate/glutamate racemases family.

It carries out the reaction L-glutamate = D-glutamate. It functions in the pathway cell wall biogenesis; peptidoglycan biosynthesis. In terms of biological role, provides the (R)-glutamate required for cell wall biosynthesis. This chain is Glutamate racemase, found in Vibrio cholerae serotype O1 (strain ATCC 39315 / El Tor Inaba N16961).